A 109-amino-acid chain; its full sequence is Putative double-stranded DNA mimic protein YciU (109 aa).

Belongs to the putative dsDNA mimic protein family.

May act as a double-stranded DNA (dsDNA) mimic. Probably regulates the activity of a dsDNA-binding protein. This Salmonella choleraesuis (strain SC-B67) protein is Putative double-stranded DNA mimic protein YciU.